Here is a 453-residue protein sequence, read N- to C-terminus: Ribosomal protein uS12 methylthiotransferase RimO (453 aa).

The 116-residue stretch at 5 to 120 (PKVGFVSLGC…VMQAVHSHLP (116 aa)) folds into the MTTase N-terminal domain. [4Fe-4S] cluster-binding residues include Cys14, Cys50, Cys79, Cys151, Cys155, and Cys158. The region spanning 137-382 (LTPRHYAYLK…MEVAEEVSAN (246 aa)) is the Radical SAM core domain. The TRAM domain maps to 385–453 (QRKIGKTLKV…ADGHDLWGEV (69 aa)).

The protein belongs to the methylthiotransferase family. RimO subfamily. [4Fe-4S] cluster serves as cofactor.

It localises to the cytoplasm. The enzyme catalyses L-aspartate(89)-[ribosomal protein uS12]-hydrogen + (sulfur carrier)-SH + AH2 + 2 S-adenosyl-L-methionine = 3-methylsulfanyl-L-aspartate(89)-[ribosomal protein uS12]-hydrogen + (sulfur carrier)-H + 5'-deoxyadenosine + L-methionine + A + S-adenosyl-L-homocysteine + 2 H(+). Catalyzes the methylthiolation of an aspartic acid residue of ribosomal protein uS12. The protein is Ribosomal protein uS12 methylthiotransferase RimO of Burkholderia orbicola (strain MC0-3).